Consider the following 158-residue polypeptide: 2-C-methyl-D-erythritol 2,4-cyclodiphosphate synthase (158 aa).

Residues D9 and H11 each coordinate a divalent metal cation. Residues D9 to H11 and H35 to S36 each bind 4-CDP-2-C-methyl-D-erythritol 2-phosphate. H43 serves as a coordination point for a divalent metal cation. Residues D57–G59, F62–D66, A101–A107, T133–E136, F140, and R143 each bind 4-CDP-2-C-methyl-D-erythritol 2-phosphate.

It belongs to the IspF family. Homotrimer. A divalent metal cation is required as a cofactor.

It carries out the reaction 4-CDP-2-C-methyl-D-erythritol 2-phosphate = 2-C-methyl-D-erythritol 2,4-cyclic diphosphate + CMP. It functions in the pathway isoprenoid biosynthesis; isopentenyl diphosphate biosynthesis via DXP pathway; isopentenyl diphosphate from 1-deoxy-D-xylulose 5-phosphate: step 4/6. In terms of biological role, involved in the biosynthesis of isopentenyl diphosphate (IPP) and dimethylallyl diphosphate (DMAPP), two major building blocks of isoprenoid compounds. Catalyzes the conversion of 4-diphosphocytidyl-2-C-methyl-D-erythritol 2-phosphate (CDP-ME2P) to 2-C-methyl-D-erythritol 2,4-cyclodiphosphate (ME-CPP) with a corresponding release of cytidine 5-monophosphate (CMP). The protein is 2-C-methyl-D-erythritol 2,4-cyclodiphosphate synthase of Bacillus cereus (strain B4264).